The chain runs to 191 residues: Calcium and integrin-binding protein 1 (191 aa).

G2 carries N-myristoyl glycine lipidation. EF-hand domains are found at residues 103-138 (TPDIKSHYAFRIFDFDDDGTLDREDLSRLVNCLTGE) and 148-183 (EMKQLIDNILEESDIDRDGTINLSEFQHVISRSPDF). 10 residues coordinate Ca(2+): D116, D118, D120, T122, D127, D161, D163, D165, T167, and E172.

Monomer. Interacts with the heterodimeric integrin alpha-IIb/beta3 (ITGA2B-ITGB3). Interacts with ITGA2B (via cytoplasmic domain); the interaction is direct and calcium-dependent. Interacts with the protein kinases PLK2/SNK and PRKDC (via the region immediately upstream of the kinase domain). Interacts with PLK3; the interaction inhibits PLK3 kinase activity. Interacts with PSEN2. Interacts (via C-terminus) with F8. Interacts with NBR1 (via C-terminus). Interacts with FEZ1 (via C-terminus). Interacts with UBR5 (via C-terminus); the interaction is sensitive to DNA damage, and may target CIB1 for ubiquitin-mediated degradation. Interacts with IFI6; the interaction is direct. Interacts with BCL2. Interacts with ITPR3; the interaction occurs in a calcium dependent manner. Interacts with PTK2/FAK1. Interacts with MAP3K5; the interaction inhibits MAP3K5 activation by phosphorylation, and its subsequent interaction with TRAF2. Interacts (via C-terminal region) with STMN2 (via the N-terminal region); the interaction is direct, occurs in a calcium-dependent manner and attenuates the STMN2-induced neurite outgrowth inhibition. Interacts with SPHK1, the interaction occurs in a calcium-dependent manner. Interacts with ITGA2B (via C-terminal cytoplasmic tail); the interaction occurs upon platelet aggregation and is stabilized/increased in a calcium and magnesium-dependent manner. Interacts with PAK1 (via N-terminal region); the interaction is direct and occurs in a calcium-dependent manner. Interacts with RAC3 (via C-terminal region); the interaction induces their association with the cytoskeleton upon alpha-IIb/beta3 integrin-mediated adhesion. Interacts with ITGA5 and ITGAV. Interacts with MYO1C. Interacts with ITGA2B (via C-terminal cytoplasmic tail region). Interacts (via C-terminal region) with PPP3R1; the interaction increases upon cardiomyocytes hypertrophy. Interacts with CACNA1C; the interaction increases upon cardiomyocytes hypertrophy. Interacts with TAS1R2 (via C-terminus); this interaction is independent of the myristoylation state of CIB1. Interacts and forms a complex with TMC6 and TMC8; the interaction stabilizes each component of the complex. In terms of tissue distribution, expressed in cardiomyocytes and neurons (at protein level). Expressed during early neural development.

It is found in the membrane. The protein localises to the cell membrane. It localises to the sarcolemma. The protein resides in the apical cell membrane. Its subcellular location is the cell projection. It is found in the ruffle membrane. The protein localises to the filopodium tip. It localises to the growth cone. The protein resides in the lamellipodium. Its subcellular location is the cytoplasm. It is found in the cytoskeleton. The protein localises to the microtubule organizing center. It localises to the centrosome. The protein resides in the perinuclear region. Its subcellular location is the nucleus. It is found in the neuron projection. The protein localises to the perikaryon. Calcium-binding protein that plays a role in the regulation of numerous cellular processes, such as cell differentiation, cell division, cell proliferation, cell migration, thrombosis, angiogenesis, cardiac hypertrophy and apoptosis. Involved in bone marrow megakaryocyte differentiation by negatively regulating thrombopoietin-mediated signaling pathway. Participates in the endomitotic cell cycle of megakaryocyte, a form of mitosis in which both karyokinesis and cytokinesis are interrupted. Plays a role in integrin signaling by negatively regulating alpha-IIb/beta3 activation in thrombin-stimulated megakaryocytes preventing platelet aggregation. Up-regulates PTK2/FAK1 activity, and is also needed for the recruitment of PTK2/FAK1 to focal adhesions; it thus appears to play an important role in focal adhesion formation. Positively regulates cell migration on fibronectin in a CDC42-dependent manner, the effect being negatively regulated by PAK1. Functions as a negative regulator of stress activated MAP kinase (MAPK) signaling pathways. Down-regulates inositol 1,4,5-trisphosphate receptor-dependent calcium signaling. Involved in sphingosine kinase SPHK1 translocation to the plasma membrane in a N-myristoylation-dependent manner preventing TNF-alpha-induced apoptosis. Regulates serine/threonine-protein kinase PLK3 activity for proper completion of cell division progression. Plays a role in microtubule (MT) dynamics during neuronal development; disrupts the MT depolymerization activity of STMN2 attenuating NGF-induced neurite outgrowth and the MT reorganization at the edge of lamellipodia. Promotes cardiomyocyte hypertrophy via activation of the calcineurin/NFAT signaling pathway. Stimulates calcineurin PPP3R1 activity by mediating its anchoring to the sarcolemma. In ischemia-induced (pathological or adaptive) angiogenesis, stimulates endothelial cell proliferation, migration and microvessel formation by activating the PAK1 and ERK1/ERK2 signaling pathway. Also promotes cancer cell survival and proliferation. May regulate cell cycle and differentiation of spermatogenic germ cells, and/or differentiation of supporting Sertoli cells. Forms a complex with TMC6/EVER1 and TMC8/EVER2 in lymphocytes and keratynocytes where CIB1 stabilizes TMC6 and TMC8 levels and reciprocally. This Rattus norvegicus (Rat) protein is Calcium and integrin-binding protein 1 (Cib1).